Consider the following 1196-residue polypeptide: Beta/alpha-amylase (1196 aa).

Positions 1–35 (MTLYRSLWKKGCMLLLSLVLSLTAFIGSPSNTASA) are cleaved as a signal peptide. The segment at 36–454 (AVADDFQASV…IISKAKPDNN (419 aa)) is beta-amylase. Asp-76 lines the substrate pocket. The Ca(2+) site is built by Glu-83 and Asp-87. Substrate-binding residues include His-116 and Asp-124. A disulfide bridge links Cys-118 with Cys-126. Ca(2+) is bound at residue Glu-170. Catalysis depends on Glu-198, which acts as the Proton donor. Substrate-binding residues include Lys-314, His-319, and Thr-357. The Proton acceptor role is filled by Glu-394. Substrate is bound by residues 395–396 (NA) and Arg-423. Repeats lie at residues 455-558 (GGTG…APAG) and 565-668 (GGTT…APSG). The segment covering 544–553 (NSGNAGTITS) has biased composition (polar residues). A disordered region spans residues 544-566 (NSGNAGTITSGAPAGANPGDGGG). Residues 669–1196 (SVLSVVTSTY…APKEVKVFTK (528 aa)) are alpha-amylase.

In the N-terminal section; belongs to the glycosyl hydrolase 14 family. This sequence in the C-terminal section; belongs to the glycosyl hydrolase 13 family. Requires Ca(2+) as cofactor.

The protein localises to the secreted. It catalyses the reaction Hydrolysis of (1-&gt;4)-alpha-D-glucosidic linkages in polysaccharides so as to remove successive maltose units from the non-reducing ends of the chains.. It carries out the reaction Endohydrolysis of (1-&gt;4)-alpha-D-glucosidic linkages in polysaccharides containing three or more (1-&gt;4)-alpha-linked D-glucose units.. The precursor protein is proteolytically cleaved to produce multiform beta-amylases and a 48 kDa alpha-amylase after secretion. This is Beta/alpha-amylase from Paenibacillus polymyxa (Bacillus polymyxa).